The primary structure comprises 119 residues: Large ribosomal subunit protein bL20 (119 aa).

Belongs to the bacterial ribosomal protein bL20 family.

Its function is as follows. Binds directly to 23S ribosomal RNA and is necessary for the in vitro assembly process of the 50S ribosomal subunit. It is not involved in the protein synthesizing functions of that subunit. The polypeptide is Large ribosomal subunit protein bL20 (Alcanivorax borkumensis (strain ATCC 700651 / DSM 11573 / NCIMB 13689 / SK2)).